A 312-amino-acid chain; its full sequence is Malate dehydrogenase (312 aa).

NAD(+)-binding positions include 7 to 13 (GAAGGIG) and Asp34. 2 residues coordinate substrate: Arg81 and Arg87. Residues Asn94 and 117-119 (ITN) contribute to the NAD(+) site. Asn119 and Arg153 together coordinate substrate. His177 functions as the Proton acceptor in the catalytic mechanism. Met227 contacts NAD(+).

The protein belongs to the LDH/MDH superfamily. MDH type 1 family. As to quaternary structure, homodimer.

The enzyme catalyses (S)-malate + NAD(+) = oxaloacetate + NADH + H(+). Catalyzes the reversible oxidation of malate to oxaloacetate. This is Malate dehydrogenase from Salmonella arizonae (strain ATCC BAA-731 / CDC346-86 / RSK2980).